The sequence spans 77 residues: Small ribosomal subunit protein bS18 (77 aa).

It belongs to the bacterial ribosomal protein bS18 family. Part of the 30S ribosomal subunit. Forms a tight heterodimer with protein bS6.

Its function is as follows. Binds as a heterodimer with protein bS6 to the central domain of the 16S rRNA, where it helps stabilize the platform of the 30S subunit. This chain is Small ribosomal subunit protein bS18, found in Bacillus cytotoxicus (strain DSM 22905 / CIP 110041 / 391-98 / NVH 391-98).